We begin with the raw amino-acid sequence, 282 residues long: HTH-type transcriptional activator RhaR (282 aa).

One can recognise an HTH araC/xylS-type domain in the interval D179–L277. 2 DNA-binding regions (H-T-H motif) span residues D196–T217 and I244–T267.

As to quaternary structure, binds DNA as a dimer.

The protein resides in the cytoplasm. Functionally, activates expression of the rhaSR operon in response to L-rhamnose. This chain is HTH-type transcriptional activator RhaR, found in Escherichia coli O1:K1 / APEC.